Here is a 266-residue protein sequence, read N- to C-terminus: Ubiquinone biosynthesis protein COQ4 homolog, mitochondrial (266 aa).

Residues H169, D170, H173, and E185 each contribute to the Zn(2+) site.

It belongs to the COQ4 family. As to quaternary structure, component of a multi-subunit COQ enzyme complex. Requires Zn(2+) as cofactor.

The protein resides in the mitochondrion inner membrane. It carries out the reaction a 4-hydroxy-3-methoxy-5-(all-trans-polyprenyl)benzoate + H(+) = a 2-methoxy-6-(all-trans-polyprenyl)phenol + CO2. Its pathway is cofactor biosynthesis; ubiquinone biosynthesis. Lyase that catalyzes the C1-decarboxylation of 4-hydroxy-3-methoxy-5-(all-trans-polyprenyl)benzoic acid into 2-methoxy-6-(all-trans-polyprenyl)phenol during ubiquinone biosynthesis. This Drosophila ananassae (Fruit fly) protein is Ubiquinone biosynthesis protein COQ4 homolog, mitochondrial.